The chain runs to 128 residues: Aspartate 1-decarboxylase (128 aa).

Serine 25 serves as the catalytic Schiff-base intermediate with substrate; via pyruvic acid. Pyruvic acid (Ser) is present on serine 25. Threonine 57 provides a ligand contact to substrate. Residue tyrosine 58 is the Proton donor of the active site. 73–75 (GSA) serves as a coordination point for substrate.

The protein belongs to the PanD family. In terms of assembly, heterooctamer of four alpha and four beta subunits. Requires pyruvate as cofactor. Is synthesized initially as an inactive proenzyme, which is activated by self-cleavage at a specific serine bond to produce a beta-subunit with a hydroxyl group at its C-terminus and an alpha-subunit with a pyruvoyl group at its N-terminus.

Its subcellular location is the cytoplasm. It carries out the reaction L-aspartate + H(+) = beta-alanine + CO2. It functions in the pathway cofactor biosynthesis; (R)-pantothenate biosynthesis; beta-alanine from L-aspartate: step 1/1. In terms of biological role, catalyzes the pyruvoyl-dependent decarboxylation of aspartate to produce beta-alanine. This Paraburkholderia xenovorans (strain LB400) protein is Aspartate 1-decarboxylase.